Consider the following 234-residue polypeptide: Ribulose-phosphate 3-epimerase (234 aa).

Serine 7 contacts substrate. A divalent metal cation-binding residues include histidine 32, aspartate 34, and histidine 65. Aspartate 34 acts as the Proton acceptor in catalysis. Substrate contacts are provided by residues histidine 65, 139–142 (GFSG), 172–174 (DGG), and 194–195 (AS). Residue aspartate 172 coordinates a divalent metal cation. The Proton donor role is filled by aspartate 172.

The protein belongs to the ribulose-phosphate 3-epimerase family. Requires a divalent metal cation as cofactor.

The catalysed reaction is D-ribulose 5-phosphate = D-xylulose 5-phosphate. It functions in the pathway carbohydrate degradation. Catalyzes the reversible epimerization of D-ribulose 5-phosphate to D-xylulose 5-phosphate. In Methanocaldococcus jannaschii (strain ATCC 43067 / DSM 2661 / JAL-1 / JCM 10045 / NBRC 100440) (Methanococcus jannaschii), this protein is Ribulose-phosphate 3-epimerase.